A 341-amino-acid chain; its full sequence is S-adenosylmethionine:tRNA ribosyltransferase-isomerase (341 aa).

It belongs to the QueA family. Monomer.

The protein resides in the cytoplasm. It carries out the reaction 7-aminomethyl-7-carbaguanosine(34) in tRNA + S-adenosyl-L-methionine = epoxyqueuosine(34) in tRNA + adenine + L-methionine + 2 H(+). It participates in tRNA modification; tRNA-queuosine biosynthesis. Transfers and isomerizes the ribose moiety from AdoMet to the 7-aminomethyl group of 7-deazaguanine (preQ1-tRNA) to give epoxyqueuosine (oQ-tRNA). The protein is S-adenosylmethionine:tRNA ribosyltransferase-isomerase of Staphylococcus haemolyticus (strain JCSC1435).